The chain runs to 130 residues: Large ribosomal subunit protein bL21 (130 aa).

Residues 103–130 form a disordered region; it reads AGGKTSKAEPRKTRKAEPAAESAPAAAE. Residues 108-120 are compositionally biased toward basic and acidic residues; the sequence is SKAEPRKTRKAEP. Positions 121–130 are enriched in low complexity; the sequence is AAESAPAAAE.

This sequence belongs to the bacterial ribosomal protein bL21 family. Part of the 50S ribosomal subunit. Contacts protein L20.

Its function is as follows. This protein binds to 23S rRNA in the presence of protein L20. The polypeptide is Large ribosomal subunit protein bL21 (Methylorubrum extorquens (strain CM4 / NCIMB 13688) (Methylobacterium extorquens)).